A 660-amino-acid polypeptide reads, in one-letter code: DNA polymerase alpha-associated DNA helicase A (660 aa).

An ATP-binding site is contributed by 232–239 (GPPGTGKT).

This sequence belongs to the DNA2/NAM7 helicase family. As to quaternary structure, associates with the hexameric DNA polymerase alpha.

It localises to the cytoplasm. It is found in the nucleus. It carries out the reaction ATP + H2O = ADP + phosphate + H(+). Functionally, DNA polymerase alpha-associated DNA helicase which may be involved in DNA replication. The chain is DNA polymerase alpha-associated DNA helicase A (hcs1) from Schizosaccharomyces pombe (strain 972 / ATCC 24843) (Fission yeast).